Reading from the N-terminus, the 163-residue chain is Nucleotide-binding protein PM1656 (163 aa).

Belongs to the YajQ family.

In terms of biological role, nucleotide-binding protein. The sequence is that of Nucleotide-binding protein PM1656 from Pasteurella multocida (strain Pm70).